We begin with the raw amino-acid sequence, 928 residues long: Outer membrane protein SlpA (928 aa).

The signal sequence occupies residues methionine 1–alanine 23. Positions glutamine 24–glutamine 84 constitute an SLH domain.

As to quaternary structure, homotrimer.

The protein localises to the cell outer membrane. Its function is as follows. Plays an important role in the structural organization and integrity of the cell envelope, bridging the outer membrane to the peptidoglyan layer. Appears to be a nonselective channel. The sequence is that of Outer membrane protein SlpA (slpA) from Thermus thermophilus (strain ATCC 27634 / DSM 579 / HB8).